The chain runs to 214 residues: MAKQIKGILGEKLGMTQVWDENNRVVPVTVVKAGPNVVTQVRTNDSDGYESVQIAFGEIDPRKVNKPLKGHFAKADVTPRRHLVEIRTADASEYTLGQEITAETFEAGVKVDVTGKSKGKGFAGVMKRHNFKGLGAGHGTQRKHRSPGSIGGCATPGRVFKGLRMAGRMGNERVTTQNLTVHAVDAEKGLLLIKGAVPGPNGGLVLVRTAAKGA.

Residues 133–154 are disordered; the sequence is GLGAGHGTQRKHRSPGSIGGCA.

It belongs to the universal ribosomal protein uL3 family. Part of the 50S ribosomal subunit. Forms a cluster with proteins L14 and L19.

Its function is as follows. One of the primary rRNA binding proteins, it binds directly near the 3'-end of the 23S rRNA, where it nucleates assembly of the 50S subunit. This chain is Large ribosomal subunit protein uL3, found in Streptomyces avermitilis (strain ATCC 31267 / DSM 46492 / JCM 5070 / NBRC 14893 / NCIMB 12804 / NRRL 8165 / MA-4680).